We begin with the raw amino-acid sequence, 171 residues long: Ribosome maturation factor RimM (171 aa).

The 73-residue stretch at 97–169 (DGEFYYHEII…RVDVSIMEGL (73 aa)) folds into the PRC barrel domain.

Belongs to the RimM family. In terms of assembly, binds ribosomal protein uS19.

The protein resides in the cytoplasm. Its function is as follows. An accessory protein needed during the final step in the assembly of 30S ribosomal subunit, possibly for assembly of the head region. Essential for efficient processing of 16S rRNA. May be needed both before and after RbfA during the maturation of 16S rRNA. It has affinity for free ribosomal 30S subunits but not for 70S ribosomes. This chain is Ribosome maturation factor RimM, found in Lactococcus lactis subsp. lactis (strain IL1403) (Streptococcus lactis).